Consider the following 452-residue polypeptide: Probable 1,4-beta-D-glucan cellobiohydrolase A (452 aa).

The signal sequence occupies residues 1-17 (MHQRALLFSALAVAANA). An N-linked (GlcNAc...) asparagine glycan is attached at Asn-81. Glu-226 serves as the catalytic Nucleophile. The active-site Proton donor is Glu-231. Residue Asn-284 is glycosylated (N-linked (GlcNAc...) asparagine). The tract at residues 405–431 (ADPSKPGVARGTCEHGAGDPENVESQH) is disordered.

Belongs to the glycosyl hydrolase 7 (cellulase C) family.

It localises to the secreted. It carries out the reaction Hydrolysis of (1-&gt;4)-beta-D-glucosidic linkages in cellulose and cellotetraose, releasing cellobiose from the non-reducing ends of the chains.. Its function is as follows. The biological conversion of cellulose to glucose generally requires three types of hydrolytic enzymes: (1) Endoglucanases which cut internal beta-1,4-glucosidic bonds; (2) Exocellobiohydrolases that cut the disaccharide cellobiose from the non-reducing end of the cellulose polymer chain; (3) Beta-1,4-glucosidases which hydrolyze the cellobiose and other short cello-oligosaccharides to glucose. The sequence is that of Probable 1,4-beta-D-glucan cellobiohydrolase A (cbhA) from Aspergillus fumigatus (strain CBS 144.89 / FGSC A1163 / CEA10) (Neosartorya fumigata).